A 616-amino-acid chain; its full sequence is Zinc metalloproteinase-disintegrin-like VLAIP-A (616 aa).

Residues 1–20 (MMQVLLVTISLAVFPYQGSS) form the signal peptide. A propeptide spanning residues 21-194 (IILESGNVND…KASQLNLTPE (174 aa)) is cleaved from the precursor. The residue at position 195 (Gln-195) is a Pyrrolidone carboxylic acid. The Peptidase M12B domain maps to 203-399 (KYIKLVIVAD…KMPQCILNKP (197 aa)). 3 cysteine pairs are disulfide-bonded: Cys-314/Cys-394, Cys-354/Cys-378, and Cys-356/Cys-361. His-339 provides a ligand contact to Zn(2+). The active site involves Glu-340. Residues His-343 and His-349 each contribute to the Zn(2+) site. Asn-377 is a glycosylation site (N-linked (GlcNAc...) asparagine). A Disintegrin domain is found at 407-493 (PAVCGNYLVE…ECPTDQFQRN (87 aa)). Residues Val-409, Asn-412, Leu-414, Glu-416, Glu-419, and Asp-422 each contribute to the Ca(2+) site. 14 disulfides stabilise this stretch: Cys-410–Cys-439, Cys-421–Cys-434, Cys-423–Cys-429, Cys-433–Cys-456, Cys-447–Cys-453, Cys-452–Cys-478, Cys-465–Cys-485, Cys-472–Cys-504, Cys-497–Cys-509, Cys-516–Cys-566, Cys-531–Cys-577, Cys-544–Cys-554, Cys-561–Cys-603, and Cys-597–Cys-609. The D/ECD-tripeptide signature appears at 471–473 (ECD).

Belongs to the venom metalloproteinase (M12B) family. P-III subfamily. P-IIIc sub-subfamily. Heterodimer; disulfide-linked. Zn(2+) is required as a cofactor. Post-translationally, the N-terminus is blocked. Expressed by the venom gland.

It is found in the secreted. Its activity is regulated as follows. Inhibited by EDTA or 1,10-phenanthroline. Not inhibited by PMSF. In terms of biological role, snake venom zinc metalloprotease that hydrolyzes the alpha-chain (FGA) and more slowly the beta-chain (FGB) of fibrinogen, without affecting the gamma-chain. Cleaves alpha-chain of fibrinogen at '432-Lys-|-Leu-433' and '535-Pro-|-Met-536' bonds. Induces apoptosis in vascular endothelial cells and inhibits endothelial cell adhesion to extracellular matrix proteins such as fibrinogen, fibronectin, vitronectin, collagen I, and collagen IV. Also hydrolyzes azocasein, and insulin B-chain (at the '38-Ala-|-Leu-39' bond). This is Zinc metalloproteinase-disintegrin-like VLAIP-A from Macrovipera lebetinus (Levantine viper).